We begin with the raw amino-acid sequence, 211 residues long: Uracil phosphoribosyltransferase (211 aa).

30–34 serves as a coordination point for GTP; the sequence is KGLVR. Residues R79, R104, and 133–141 each bind 5-phospho-alpha-D-ribose 1-diphosphate; that span reads DPMLATGTT. Uracil-binding positions include I197 and 202–204; that span reads GDA. D203 contacts 5-phospho-alpha-D-ribose 1-diphosphate.

Belongs to the UPRTase family. Mg(2+) is required as a cofactor.

The enzyme catalyses UMP + diphosphate = 5-phospho-alpha-D-ribose 1-diphosphate + uracil. Its pathway is pyrimidine metabolism; UMP biosynthesis via salvage pathway; UMP from uracil: step 1/1. Allosterically activated by GTP. In terms of biological role, catalyzes the conversion of uracil and 5-phospho-alpha-D-ribose 1-diphosphate (PRPP) to UMP and diphosphate. This is Uracil phosphoribosyltransferase from Pyrobaculum arsenaticum (strain DSM 13514 / JCM 11321 / PZ6).